Consider the following 864-residue polypeptide: Probable beta-glucosidase J (864 aa).

Aspartate 233 is a catalytic residue. The PA14 domain maps to 411–578 (TGEPGYTFRV…DTDAAIQQAV (168 aa)). 3 N-linked (GlcNAc...) asparagine glycosylation sites follow: asparagine 434, asparagine 447, and asparagine 503.

It belongs to the glycosyl hydrolase 3 family.

It is found in the secreted. It carries out the reaction Hydrolysis of terminal, non-reducing beta-D-glucosyl residues with release of beta-D-glucose.. The protein operates within glycan metabolism; cellulose degradation. Beta-glucosidases are one of a number of cellulolytic enzymes involved in the degradation of cellulosic biomass. Catalyzes the last step releasing glucose from the inhibitory cellobiose. The sequence is that of Probable beta-glucosidase J (bglJ) from Neosartorya fischeri (strain ATCC 1020 / DSM 3700 / CBS 544.65 / FGSC A1164 / JCM 1740 / NRRL 181 / WB 181) (Aspergillus fischerianus).